Here is a 332-residue protein sequence, read N- to C-terminus: 2,7-dihydroxy-5-methyl-1-naphthoate 7-O-methyltransferase (332 aa).

Arginine 11 lines the substrate pocket. Residues tryptophan 133, histidine 153, 175 to 179 (DVGGG), glycine 177, aspartate 200, 227 to 228 (SF), and 242 to 243 (SA) each bind S-adenosyl-L-methionine. Histidine 246 functions as the Proton acceptor in the catalytic mechanism. Aspartate 247 serves as a coordination point for substrate.

Belongs to the class I-like SAM-binding methyltransferase superfamily. Cation-independent O-methyltransferase family.

It catalyses the reaction 2,7-dihydroxy-5-methyl-1-naphthoate + S-adenosyl-L-methionine = 2-hydroxy-7-methoxy-5-methyl-1-naphthoate + S-adenosyl-L-homocysteine + H(+). Its pathway is antibiotic biosynthesis. S-adenosyl-L-methionine-dependent O-methyltransferase that catalyzes regiospecific methylation at the 7-hydroxy group of 2,7-dihydroxy-5-methyl-1-naphthoate in the biosynthesis of the naphthoate moiety of the neocarzinostatin chromophore. Also recognizes other dihydroxynaphthoate as substrates and catalyzes their regiospecific O-methylation. The carboxylate and its ortho-hydroxy groups of the substrate appear to be crucial for NcsB1 substrate recognition and binding, and O-methylation takes place only at the free hydroxy group of these dihydroxynaphthoic acids. This Streptomyces carzinostaticus protein is 2,7-dihydroxy-5-methyl-1-naphthoate 7-O-methyltransferase.